Here is a 124-residue protein sequence, read N- to C-terminus: Large ribosomal subunit protein bL12 (124 aa).

The protein belongs to the bacterial ribosomal protein bL12 family. In terms of assembly, homodimer. Part of the ribosomal stalk of the 50S ribosomal subunit. Forms a multimeric L10(L12)X complex, where L10 forms an elongated spine to which 2 to 4 L12 dimers bind in a sequential fashion. Binds GTP-bound translation factors.

Functionally, forms part of the ribosomal stalk which helps the ribosome interact with GTP-bound translation factors. Is thus essential for accurate translation. The protein is Large ribosomal subunit protein bL12 of Sulfurovum sp. (strain NBC37-1).